The following is a 65-amino-acid chain: LRCLNCPEVFCRNFHTCRNGEKICFKRFDQRKLLGKRYTRGCAVTCPVAKPREIVECCSTDGCNR.

5 disulfide bridges follow: Cys3/Cys24, Cys6/Cys11, Cys17/Cys42, Cys46/Cys57, and Cys58/Cys63.

This sequence belongs to the three-finger toxin family. Ancestral subfamily. Orphan group II sub-subfamily. As to expression, expressed by the venom gland.

It is found in the secreted. In terms of biological role, binds with low affinity to muscular (alpha-1-beta-1-delta-epsilon/CHRNA1-CHRNB1-CHRND-CHRNE) and very low affinity to neuronal (alpha-7/CHRNA7) nicotinic acetylcholine receptor (nAChR). The polypeptide is Weak toxin CM-10 (Naja nivea (Cape cobra)).